A 632-amino-acid chain; its full sequence is MFSSSLLSKDNKSAVDFHEIPLKQTALDVLHAVFGYQSFRKGQEEVIDATLMGKDSLVIMATGNGKSLCYQIPALCFEGLTLVISPLISLMKDQVDQLLANGIEADYLNSSQTFTEQQQVQNKLMSGTLKLLYVSPEKVMTTSFFHLISHCKVSFVAIDEAHCISQWGHDFRPEYTQLGGLKSCFPHAPIMALTATADHATRQDILRHLNLQSPHVYIGSFDRPNIRYTLVEKFKPMEQLCRFVLGQKGKSGIIYCNSRSKVERIAESLRNKGVSAQAYHAGLETSQREQVQRAFQRDNVQVVVATIAFGMGINKSNVRFVVHFDLPRSIESYYQETGRAGRDDLPAEAVLFYEPADYAWLHKILLEKPESPQRQIEALKLQAIGEFAESQTCRRLVLLNYFGEHQQKPCQNCDICLDPPKQYDGLIDAQKVMSTIYRIGQRFGVHYVIAVLRGLSNQKIKDNQHEQLSVYGIGKDKSKEHWQSVIRQLIHLGFIKQVFDHFNATLQLTENAKPILRGEQPLSLAMPRISSLTSVVAPQRYAIAQYDKDLFARLRFLRKQIADKENIPAYIVFNDATLQEMAQYQPTTKAEMLAINGVGATKFERFAQPFMQIIQQHKKVLTQHEPPLSLES.

One can recognise a Helicase ATP-binding domain in the interval 47–215 (IDATLMGKDS…LRHLNLQSPH (169 aa)). 60-67 (MATGNGKS) is an ATP binding site. A DEAH box motif is present at residues 159-162 (DEAH). The Helicase C-terminal domain occupies 236–385 (PMEQLCRFVL…IEALKLQAIG (150 aa)). Zn(2+) is bound by residues C393, C410, C413, and C416. Residues 544 to 624 (AQYDKDLFAR…QQHKKVLTQH (81 aa)) enclose the HRDC domain.

It belongs to the helicase family. RecQ subfamily. Requires Mg(2+) as cofactor. It depends on Zn(2+) as a cofactor.

It carries out the reaction Couples ATP hydrolysis with the unwinding of duplex DNA by translocating in the 3'-5' direction.. The catalysed reaction is ATP + H2O = ADP + phosphate + H(+). An ATP-dependent DNA helicase which unwinds DNA in a 3'-5' direction. Plays a role in recombination. In Pasteurella multocida (strain Pm70), this protein is ATP-dependent DNA helicase RecQ.